Consider the following 393-residue polypeptide: NAD(P)H-quinone oxidoreductase subunit H, chloroplastic (393 aa).

This sequence belongs to the complex I 49 kDa subunit family. NDH is composed of at least 16 different subunits, 5 of which are encoded in the nucleus.

Its subcellular location is the plastid. It is found in the chloroplast thylakoid membrane. The catalysed reaction is a plastoquinone + NADH + (n+1) H(+)(in) = a plastoquinol + NAD(+) + n H(+)(out). It catalyses the reaction a plastoquinone + NADPH + (n+1) H(+)(in) = a plastoquinol + NADP(+) + n H(+)(out). Its function is as follows. NDH shuttles electrons from NAD(P)H:plastoquinone, via FMN and iron-sulfur (Fe-S) centers, to quinones in the photosynthetic chain and possibly in a chloroplast respiratory chain. The immediate electron acceptor for the enzyme in this species is believed to be plastoquinone. Couples the redox reaction to proton translocation, and thus conserves the redox energy in a proton gradient. The polypeptide is NAD(P)H-quinone oxidoreductase subunit H, chloroplastic (Cicer arietinum (Chickpea)).